Reading from the N-terminus, the 227-residue chain is Cytochrome c oxidase subunit 2 (227 aa).

Residues 1–14 (MAYPFQLGLQDATS) lie on the Mitochondrial intermembrane side of the membrane. The chain crosses the membrane as a helical span at residues 15–45 (PIMEELTNFHDHTLMIVFLISSLVLYIISSM). Residues 46 to 59 (LATKMTHTSTMDAQ) lie on the Mitochondrial matrix side of the membrane. A helical transmembrane segment spans residues 60–87 (SMETIWTILPAVILVLIALPSLRILYMM). Residues 88–227 (DEINNPVLTV…FFENWSASMI (140 aa)) are Mitochondrial intermembrane-facing. Cu cation is bound by residues histidine 161, cysteine 196, glutamate 198, cysteine 200, histidine 204, and methionine 207. Glutamate 198 is a binding site for Mg(2+).

It belongs to the cytochrome c oxidase subunit 2 family. Component of the cytochrome c oxidase (complex IV, CIV), a multisubunit enzyme composed of 14 subunits. The complex is composed of a catalytic core of 3 subunits MT-CO1, MT-CO2 and MT-CO3, encoded in the mitochondrial DNA, and 11 supernumerary subunits COX4I, COX5A, COX5B, COX6A, COX6B, COX6C, COX7A, COX7B, COX7C, COX8 and NDUFA4, which are encoded in the nuclear genome. The complex exists as a monomer or a dimer and forms supercomplexes (SCs) in the inner mitochondrial membrane with NADH-ubiquinone oxidoreductase (complex I, CI) and ubiquinol-cytochrome c oxidoreductase (cytochrome b-c1 complex, complex III, CIII), resulting in different assemblies (supercomplex SCI(1)III(2)IV(1) and megacomplex MCI(2)III(2)IV(2)). Found in a complex with TMEM177, COA6, COX18, COX20, SCO1 and SCO2. Interacts with TMEM177 in a COX20-dependent manner. Interacts with COX20. Interacts with COX16. Cu cation is required as a cofactor.

The protein localises to the mitochondrion inner membrane. The catalysed reaction is 4 Fe(II)-[cytochrome c] + O2 + 8 H(+)(in) = 4 Fe(III)-[cytochrome c] + 2 H2O + 4 H(+)(out). Functionally, component of the cytochrome c oxidase, the last enzyme in the mitochondrial electron transport chain which drives oxidative phosphorylation. The respiratory chain contains 3 multisubunit complexes succinate dehydrogenase (complex II, CII), ubiquinol-cytochrome c oxidoreductase (cytochrome b-c1 complex, complex III, CIII) and cytochrome c oxidase (complex IV, CIV), that cooperate to transfer electrons derived from NADH and succinate to molecular oxygen, creating an electrochemical gradient over the inner membrane that drives transmembrane transport and the ATP synthase. Cytochrome c oxidase is the component of the respiratory chain that catalyzes the reduction of oxygen to water. Electrons originating from reduced cytochrome c in the intermembrane space (IMS) are transferred via the dinuclear copper A center (CU(A)) of subunit 2 and heme A of subunit 1 to the active site in subunit 1, a binuclear center (BNC) formed by heme A3 and copper B (CU(B)). The BNC reduces molecular oxygen to 2 water molecules using 4 electrons from cytochrome c in the IMS and 4 protons from the mitochondrial matrix. The protein is Cytochrome c oxidase subunit 2 (MT-CO2) of Acomys wilsoni (Wilson's spiny mouse).